Consider the following 356-residue polypeptide: MKKSDFHYDLPEELIAQAPLAERAASRLLVVPPTPAAFSDRQVRDLPELLQPGDLLIFNDTRVIPARLFGQKASGGRVEILIERLLGGQQARAQIGASKSPKAGSVIALDAGGQAEVLGRDGEFYLLRFDIPAPLEHWLLDAGRLPLPPYIRREPGLDDRERYQTVFAREVGAVAAPTAGLHFDEALLARLRERGVEFGHVTLHVGAGTFQPVRVDALDKHVMHTEWLNVGAALVEQVRRTRARGGRVIAVGTTVVRSLESAWRKTDDAPHGELQPFAGETQIFILPGYRIRSVDAMVTNFHLPESTLLMMVSAFAGCDRIFAAYAHAIAQRYRFFSYGDAMLLWSREWGIGNGES.

Belongs to the QueA family. As to quaternary structure, monomer.

Its subcellular location is the cytoplasm. The enzyme catalyses 7-aminomethyl-7-carbaguanosine(34) in tRNA + S-adenosyl-L-methionine = epoxyqueuosine(34) in tRNA + adenine + L-methionine + 2 H(+). It participates in tRNA modification; tRNA-queuosine biosynthesis. In terms of biological role, transfers and isomerizes the ribose moiety from AdoMet to the 7-aminomethyl group of 7-deazaguanine (preQ1-tRNA) to give epoxyqueuosine (oQ-tRNA). The protein is S-adenosylmethionine:tRNA ribosyltransferase-isomerase of Xanthomonas campestris pv. campestris (strain B100).